The primary structure comprises 269 residues: Ribonuclease HII (269 aa).

The RNase H type-2 domain maps to 83–269 (YLIAGVDEVG…HRMSFLTNIL (187 aa)). A divalent metal cation-binding residues include D89, E90, and D185.

It belongs to the RNase HII family. It depends on Mn(2+) as a cofactor. Mg(2+) is required as a cofactor.

The protein localises to the cytoplasm. The enzyme catalyses Endonucleolytic cleavage to 5'-phosphomonoester.. Functionally, endonuclease that specifically degrades the RNA of RNA-DNA hybrids. The chain is Ribonuclease HII from Clostridium botulinum (strain ATCC 19397 / Type A).